The following is a 964-amino-acid chain: Protein HIRA (964 aa).

6 WD repeats span residues 10–50 (RHEG…KDNT), 64–103 (DHFGSVNCVRWAKHGRYLASGSDDQVILIHERKAGSGTSE), 123–162 (GHTADVVDLSWSPDDSTLASGSLDNTIHIWNMNNGICTAV), 165–204 (GHTSLVKGVTWDPIGSFIASQSDDKTVMIWRTSDWSLAHK), 259–331 (GHNA…PLFV), and 335–376 (FFSQ…HRLS). The disordered stretch occupies residues 453–490 (SHEDSKKTAGPTADDVKKGNQLSSPVKQREYRRPDGRK). Basic and acidic residues predominate over residues 479–490 (KQREYRRPDGRK). One copy of the WD 7 repeat lies at 644-685 (LWSDRISGKVTVLAGNANFWAVGCEDGFLQVYTRCGVRAMPA). The stretch at 920–940 (ASNRKVQRLLNEFMDLLLEYE) forms a coiled coil.

It belongs to the WD repeat HIR1 family. As to quaternary structure, interacts with RS2. More abundant in apices and young leaf primordia than in fully expanded leaf tissues.

It is found in the nucleus. In terms of biological role, histone chaperone involved in maintining knox genes silencing throughout leaf development. The polypeptide is Protein HIRA (Zea mays (Maize)).